A 121-amino-acid chain; its full sequence is Large ribosomal subunit protein bL19 (121 aa).

Belongs to the bacterial ribosomal protein bL19 family.

In terms of biological role, this protein is located at the 30S-50S ribosomal subunit interface and may play a role in the structure and function of the aminoacyl-tRNA binding site. The sequence is that of Large ribosomal subunit protein bL19 from Acidothermus cellulolyticus (strain ATCC 43068 / DSM 8971 / 11B).